The following is a 295-amino-acid chain: MNGLVKNGNVEKPNKYFDIKDKRDFLYHFGFGVDTLDIPAVFGDTKFVCTGGSPGRFKLYAEWFAKEANIPCSENLSRSDRFVIYKTGPVCWINHGMGTPSLSIMLVESFKLMHHAGVKNPTFIRLGTSGGVGVPPGTVVVSTEAMNAELGDTYVQIIAGKRIERPTQLDAALREALCEVGKEKSIPVETGKTMCADDFYEGQMRLDGYFCDYEEEDKYAFLRKLNALGVRNIEMESTCFASFTCRAGFQSAIVCVTLLNRMDGDQVQIAKEQYIEYEERPFRLVTAYIRKQTGI.

Phosphate-binding positions include arginine 81 and 125-128 (RLGT). Glutamine 203 and arginine 205 together coordinate substrate.

It belongs to the PNP/UDP phosphorylase family. Expressed in hypodermis, pharynx, spermatheca and gonad.

The enzyme catalyses uridine + phosphate = alpha-D-ribose 1-phosphate + uracil. It catalyses the reaction thymidine + phosphate = 2-deoxy-alpha-D-ribose 1-phosphate + thymine. The catalysed reaction is 2'-deoxyuridine + phosphate = 2-deoxy-alpha-D-ribose 1-phosphate + uracil. It functions in the pathway pyrimidine metabolism; UMP biosynthesis via salvage pathway; uracil from uridine (phosphorylase route): step 1/1. The protein operates within pyrimidine metabolism; dTMP biosynthesis via salvage pathway; dTMP from thymine: step 1/2. Functionally, catalyzes the reversible phosphorylytic cleavage of uridine and thymidine to uracil and ribose-phosphate or thymine and deoxyribose-1-phosphate. The produced molecules are then utilized as carbon and energy sources or in the rescue of pyrimidine bases for nucleotide synthesis. Required for normal lifespan. This is Uridine and thymidine phosphorylase from Caenorhabditis elegans.